The sequence spans 282 residues: Cell division protein DivIB (282 aa).

The Cytoplasmic segment spans residues 1–59; the sequence is MLDDRSAIEHHKYSQRLTELERRSAAAQQRQQKKKPPKMHVGNKIRGIKIKRYVSNGER. Residues 19–41 are disordered; that stretch reads ELERRSAAAQQRQQKKKPPKMHV. The span at 31 to 41 shows a compositional bias: basic residues; that stretch reads QQKKKPPKMHV. Residues 60–80 form a helical membrane-spanning segment; that stretch reads VLKLVVLFSAILLFMLYIISP. Residues 81–282 lie on the Extracellular side of the membrane; the sequence is LSKITTLHVT…YSYDYGSKDK (202 aa). The POTRA domain occupies 82-153; the sequence is SKITTLHVTG…QSLQISVKEN (72 aa).

The protein belongs to the FtsQ/DivIB family. DivIB subfamily.

It is found in the cell membrane. Functionally, cell division protein that may be involved in stabilizing or promoting the assembly of the division complex. The sequence is that of Cell division protein DivIB from Limosilactobacillus reuteri (strain ATCC 55730 / SD2112) (Lactobacillus reuteri).